A 1755-amino-acid chain; its full sequence is Transposon Ty1-NL1 Gag-Pol polyprotein (1755 aa).

Polar residues-rich tracts occupy residues 1–23 (MESQQLSQHSPISHGSACASVTS), 48–60 (TKANSQQTTTPAS), 71–86 (SPQTAQSHSPQNGPYQ), and 131–152 (PQYPSSVGTPLSTPSPESGNTF). 3 disordered regions span residues 1 to 86 (MESQ…GPYQ), 131 to 171 (PQYP…YVRP), and 350 to 420 (QQES…IRGS). A compositionally biased stretch (low complexity) spans 153–165 (TDSSSADSDMTST). The tract at residues 299–401 (NNGIPINNKV…NSQSRTARAH (103 aa)) is RNA-binding. The segment covering 363 to 372 (NPSDEKKDSR) has biased composition (basic and acidic residues). The span at 373–412 (TYTNTTKPKSITRNSQKPNNSQSRTARAHNVSTSNNSSGP) shows a compositional bias: polar residues. Aspartate 461 acts as the For protease activity; shared with dimeric partner in catalysis. The integrase-type zinc finger-like stretch occupies residues 583–640 (NVHTSESTRKYPYPFIHRMLAHANAQTIRYSLKNNTITYFNESDVDWSSAIDYQCPDC). Residues 660 to 835 (NSYEPFQYLH…AGLDISTLLP (176 aa)) enclose the Integrase catalytic domain. Mg(2+)-binding residues include aspartate 671 and aspartate 736. 2 disordered regions span residues 956-1120 (SKAV…TCPK) and 1146-1172 (DSFKELPPINSRQTNSSLGGIGDSNAY). Low complexity predominate over residues 960–969 (SPTDSTPPST). Polar residues predominate over residues 1005–1015 (STPQISDIEST). Residues 1038-1053 (ESSHTSKSKDFRHSDS) are compositionally biased toward basic and acidic residues. Composition is skewed to polar residues over residues 1054-1082 (YSDNETNHTNVPISSTGGTNNKTVPQTSE) and 1095-1106 (SIDTSSSESNSL). The Bipartite nuclear localization signal motif lies at 1178–1212 (KKRSLEDNETEIKVSRDTWNTKNMRSLEPPRSKKR). The Reverse transcriptase Ty1/copia-type domain maps to 1338-1476 (NNYYITQLDI…DILGLEIKYQ (139 aa)). Mg(2+)-binding residues include aspartate 1346, aspartate 1427, aspartate 1428, aspartate 1610, glutamate 1652, and aspartate 1685. Residues 1610 to 1752 (DASYGNQPYY…IKTFKLLTNK (143 aa)) enclose the RNase H Ty1/copia-type domain.

As to quaternary structure, the capsid protein forms a homotrimer, from which the VLPs are assembled. The protease is a homodimer, whose active site consists of two apposed aspartic acid residues. Initially, virus-like particles (VLPs) are composed of the structural unprocessed proteins Gag and Gag-Pol, and also contain the host initiator methionine tRNA (tRNA(i)-Met) which serves as a primer for minus-strand DNA synthesis, and a dimer of genomic Ty RNA. Processing of the polyproteins occurs within the particle and proceeds by an ordered pathway, called maturation. First, the protease (PR) is released by autocatalytic cleavage of the Gag-Pol polyprotein yielding capsid protein p45 and a Pol-p154 precursor protein. This cleavage is a prerequisite for subsequent processing of Pol-p154 at the remaining sites to release the mature structural and catalytic proteins. Maturation takes place prior to the RT reaction and is required to produce transposition-competent VLPs.

The protein resides in the cytoplasm. The protein localises to the nucleus. The catalysed reaction is DNA(n) + a 2'-deoxyribonucleoside 5'-triphosphate = DNA(n+1) + diphosphate. It carries out the reaction Endonucleolytic cleavage to 5'-phosphomonoester.. Capsid protein (CA) is the structural component of the virus-like particle (VLP), forming the shell that encapsulates the retrotransposons dimeric RNA genome. The particles are assembled from trimer-clustered units and there are holes in the capsid shells that allow for the diffusion of macromolecules. CA also has nucleocapsid-like chaperone activity, promoting primer tRNA(i)-Met annealing to the multipartite primer-binding site (PBS), dimerization of Ty1 RNA and initiation of reverse transcription. Functionally, the aspartyl protease (PR) mediates the proteolytic cleavages of the Gag and Gag-Pol polyproteins after assembly of the VLP. Its function is as follows. Reverse transcriptase/ribonuclease H (RT) is a multifunctional enzyme that catalyzes the conversion of the retro-elements RNA genome into dsDNA within the VLP. The enzyme displays a DNA polymerase activity that can copy either DNA or RNA templates, and a ribonuclease H (RNase H) activity that cleaves the RNA strand of RNA-DNA heteroduplexes during plus-strand synthesis and hydrolyzes RNA primers. The conversion leads to a linear dsDNA copy of the retrotransposon that includes long terminal repeats (LTRs) at both ends. In terms of biological role, integrase (IN) targets the VLP to the nucleus, where a subparticle preintegration complex (PIC) containing at least integrase and the newly synthesized dsDNA copy of the retrotransposon must transit the nuclear membrane. Once in the nucleus, integrase performs the integration of the dsDNA into the host genome. This chain is Transposon Ty1-NL1 Gag-Pol polyprotein (TY1B-NL1), found in Saccharomyces cerevisiae (strain ATCC 204508 / S288c) (Baker's yeast).